The chain runs to 471 residues: COP9 signalosome complex subunit 1 (471 aa).

One can recognise a PCI domain in the interval 249 to 411; that stretch reads CFLLASFDHC…KILYARDVDQ (163 aa). Residues 445–471 are disordered; sequence HVKSPPREGSQGELTPANSQSRMSTNM. S448 and S454 each carry phosphoserine. Polar residues predominate over residues 456–471; that stretch reads GELTPANSQSRMSTNM. T459 carries the post-translational modification Phosphothreonine. S463 carries the phosphoserine modification.

This sequence belongs to the CSN1 family. In terms of assembly, component of the CSN complex, composed of COPS1/GPS1, COPS2, COPS3, COPS4, COPS5, COPS6, COPS7 (COPS7A or COPS7B), COPS8 and COPS9. In the complex, it probably interacts directly with COPS2, COPS3, COPS4 and COPS5. Interacts directly with inositol kinase ITPK1. Interacts with CAPN8. Interacts with USP48. Interacts with ASB4; this interaction negatively regulates GPS1. As to expression, expressed in the base region of the oxyntic and pyloric mucosae.

Its subcellular location is the cytoplasm. The protein resides in the nucleus. Its function is as follows. Essential component of the COP9 signalosome complex (CSN), a complex involved in various cellular and developmental processes. The CSN complex is an essential regulator of the ubiquitin (Ubl) conjugation pathway by mediating the deneddylation of the cullin subunits of SCF-type E3 ligase complexes, leading to decrease the Ubl ligase activity of SCF-type complexes such as SCF, CSA or DDB2. The complex is also involved in phosphorylation of p53/TP53, c-jun/JUN, IkappaBalpha/NFKBIA, ITPK1 and IRF8/ICSBP, possibly via its association with CK2 and PKD kinases. CSN-dependent phosphorylation of TP53 and JUN promotes and protects degradation by the Ubl system, respectively. Suppresses G-protein- and mitogen-activated protein kinase-mediated signal transduction. The sequence is that of COP9 signalosome complex subunit 1 (Gps1) from Mus musculus (Mouse).